The primary structure comprises 663 residues: Polyunsaturated fatty acid lipoxygenase ALOX12 (663 aa).

Residues 2-114 (GRYRVRVVTG…ILSLPEGTAR (113 aa)) enclose the PLAT domain. Positions 115-663 (LAGDNALDVF…PSRIENSITI (549 aa)) constitute a Lipoxygenase domain. Phosphoserine is present on Ser-246. 5 residues coordinate Fe cation: His-360, His-365, His-540, Asn-544, and Ile-663.

Belongs to the lipoxygenase family. Fe cation serves as cofactor. As to expression, found primarily in platelets and in microsomal and cytosolic fractions of the epidermis (at protein level).

The protein resides in the cytoplasm. The protein localises to the cytosol. Its subcellular location is the membrane. It catalyses the reaction (5Z,8Z,11Z,14Z)-eicosatetraenoate + O2 = (12S)-hydroperoxy-(5Z,8Z,10E,14Z)-eicosatetraenoate. The enzyme catalyses (9Z,12Z)-octadecadienoate + O2 = (13S)-hydroperoxy-(9Z,11E)-octadecadienoate. The catalysed reaction is 2 leukotriene A4 + O2 + 2 H2O = 2 lipoxin A4. It carries out the reaction 2 leukotriene A4 + O2 + 2 H2O = 2 lipoxin B4. It catalyses the reaction (5Z,8Z,11Z)-eicosatrienoate + O2 = (12S)-hydroperoxy-(5Z,8Z,10E)-eicosatrienoate. The enzyme catalyses (8Z,11Z,14Z)-eicosatrienoate + O2 = (12S)-hydroperoxy-(8Z,10E,14Z)-eicosatrienoate. The catalysed reaction is (4Z,7Z,10Z,13Z,16Z,19Z)-docosahexaenoate + O2 = (14S)-hydroperoxy-(4Z,7Z,10Z,12E,16Z,19Z)-docosahexaenoate. It carries out the reaction (7S)-hydroperoxy-(4Z,8E,10Z,13Z,16Z,19Z)-docosahexaenoate + O2 = (7S,14S)-dihydroperoxy-(4Z,8E,10Z,12E,16Z,19Z)-docosahexaenoate. It catalyses the reaction (7S)-hydroperoxy-(4Z,8E,10Z,13Z,16Z,19Z)-docosahexaenoate + O2 = (7S,17S)-dihydroperoxy-(4Z,8E,10Z,13Z,15E,19Z)-docosahexaenoate. The enzyme catalyses (14R,15S)-epoxy-(5Z,8Z,11Z)-eicosatrienoate + O2 = (12S)-hydroperoxy-(14R,15S)-epoxy-(5Z,8Z,10E)-eicosatrienoate. The catalysed reaction is (14S,15R)-epoxy-(5Z,8Z,11Z)-eicosatrienoate + O2 = (12S)-hydroperoxy-(14S,15R)-epoxy-(5Z,8Z,10E)-eicosatrienoate. It carries out the reaction (5Z,8Z,11Z,14Z)-eicosatetraenoate + O2 = (15S)-hydroperoxy-(5Z,8Z,11Z,13E)-eicosatetraenoate. It catalyses the reaction (14S)-hydroperoxy-(4Z,7Z,10Z,12E,16Z,19Z)-docosahexaenoate = (13S,14S)-epoxy-(4Z,7Z,9E,11E,16Z,19Z)-docosahexaenoate + H2O. The enzyme catalyses N-(5Z,8Z,11Z,14Z)-eicosatetraenoyl-L-alanine + O2 = N-(15S)-hydroperoxy-(5Z,8Z,11Z,13E)-eicosatetraenoyl-alanine. The catalysed reaction is N-(5Z,8Z,11Z,14Z)-eicosatetraenoyl-L-alanine + O2 = N-(12S)-hydroperoxy-(5Z,8Z,10E,14Z)-eicosatetraenoyl-alanine. It carries out the reaction N-(5Z,8Z,11Z,14Z)-eicosatetraenoyl-gamma-aminobutanoate + O2 = N-(15S)-hydroperoxy-(5Z,8Z,11Z,13E)-eicosatetraenoyl-gamma-aminobutanoate. It catalyses the reaction N-(5Z,8Z,11Z,14Z)-eicosatetraenoyl-gamma-aminobutanoate + O2 = N-(12S)-hydroperoxy-(5Z,8Z,10E,14Z)-eicosatetraenoyl-gamma-aminobutanoate. The enzyme catalyses N-(5Z,8Z,11Z,14Z)-eicosatetraenoyl-glycine + O2 = N-(15S)-hydroperoxy-(5Z,8Z,11Z,13E)-eicosatetraenoyl-glycine. The catalysed reaction is N-(5Z,8Z,11Z,14Z)-eicosatetraenoyl-glycine + O2 = N-(12S)-hydroperoxy-(5Z,8Z,10E,14Z)-eicosatetraenoyl-glycine. It carries out the reaction N-(5Z,8Z,11Z,14Z)-eicosatetraenoyl-taurine + O2 = N-(12S)-hydroperoxy-(5Z,8Z,10E,14Z)-eicosatetraenoyl-taurine. It catalyses the reaction N-(5Z,8Z,11Z,14Z)-eicosatetraenoyl-taurine + O2 = N-(15S)-hydroperoxy-(5Z,8Z,11Z,13E)-eicosatetraenoyl-taurine. The enzyme catalyses (5Z,8Z,11Z,14Z,17Z)-eicosapentaenoate + O2 = (12S)-hydroperoxy-(5Z,8Z,10E,14Z,17Z)-eicosapentaenoate. Its pathway is lipid metabolism; hydroperoxy eicosatetraenoic acid biosynthesis. Its activity is regulated as follows. Activated by EGF. Arachidonic acid conversion is inhibited by (13S,14S)-epoxy-(4Z,7Z,9E,11E,16Z,19Z)-docosahexaenoate (13S,14S-epoxy-DHA). Arachidonate 12-lipoxygenase activity is decreased when PH decreases from 7.4 to 6. Its function is as follows. Catalyzes the regio and stereo-specific incorporation of molecular oxygen into free and esterified polyunsaturated fatty acids generating lipid hydroperoxides that can be further reduced to the corresponding hydroxy species. Mainly converts arachidonate ((5Z,8Z,11Z,14Z)-eicosatetraenoate) to the specific bioactive lipid (12S)-hydroperoxyeicosatetraenoate/(12S)-HPETE. Through the production of bioactive lipids like (12S)-HPETE it regulates different biological processes including platelet activation. It can also catalyze the epoxidation of double bonds of polyunsaturated fatty acids such as (14S)-hydroperoxy-docosahexaenoate/(14S)-HPDHA resulting in the formation of (13S,14S)-epoxy-DHA. Furthermore, it may participate in the sequential oxidations of DHA ((4Z,7Z,10Z,13Z,16Z,19Z)-docosahexaenoate) to generate specialized pro-resolving mediators (SPMs) like resolvin D5 ((7S,17S)-diHPDHA) and (7S,14S)-diHPDHA, that actively down-regulate the immune response and have anti-aggregation properties with platelets. An additional function involves a multistep process by which it transforms leukotriene A4/LTA4 into the bioactive lipids lipoxin A4/LXA4 and lipoxin B4/LXB4, both are vasoactive and LXA4 may regulate neutrophil function via occupancy of specific recognition sites. Can also peroxidize linoleate ((9Z,12Z)-octadecadienoate) to (13S)-hydroperoxyoctadecadienoate/ (13S-HPODE). Due to its role in regulating both the expression of the vascular endothelial growth factor (VEGF, an angiogenic factor involved in the survival and metastasis of solid tumors) and the expression of integrin beta-1 (known to affect tumor cell migration and proliferation), it can be regarded as protumorigenic. Important for cell survival, as it may play a role not only in proliferation but also in the prevention of apoptosis in vascular smooth muscle cells. The sequence is that of Polyunsaturated fatty acid lipoxygenase ALOX12 (Alox12) from Mus musculus (Mouse).